A 222-amino-acid chain; its full sequence is Dense granule protein 3 (222 aa).

A run of 2 helical transmembrane segments spans residues 22 to 42 (LIPFLVPFVVFLVAAALGGLA) and 162 to 182 (IPGYFVVINAILAAYYIRKVL). A Prevents secretion from ER motif is present at residues 219 to 222 (KKQT).

Homodimer. Interacts (via N-terminus) with human host CAMLG (via N-terminus).

The protein localises to the cytoplasm. It is found in the host endoplasmic reticulum. It localises to the parasitophorous vacuole membrane. Its function is as follows. Direct host-parasite interaction occurs at the cytoplasmic faces of the parasitophorous vacuole membrane (PVM) and the host endoplasmic reticulum (ER) membrane via GRA3 and host CAMLG association. Direct insertion of GRA3 ER retrieval motif into the host ER membrane contributes to the host ER recruitment to the PVM. This Toxoplasma gondii protein is Dense granule protein 3.